Here is a 30-residue protein sequence, read N- to C-terminus: GIPCGESCVYIPCITAAIGCSCKSKVCYRN.

Residues 1–30 (GIPCGESCVYIPCITAAIGCSCKSKVCYRN) constitute a cross-link (cyclopeptide (Gly-Asn)). 3 disulfide bridges follow: Cys4-Cys20, Cys8-Cys22, and Cys13-Cys27.

Belongs to the cyclotide family. Bracelet subfamily. In terms of processing, this is a cyclic peptide.

Its function is as follows. Probably participates in a plant defense mechanism. This Melicytus dentatus (Tree violet) protein is Cyclotide mden-E.